Consider the following 210-residue polypeptide: Putative truncated L-serine dehydratase SDL1 (210 aa).

The protein belongs to the serine/threonine dehydratase family. It depends on pyridoxal 5'-phosphate as a cofactor.

It localises to the cytoplasm. The catalysed reaction is L-serine = pyruvate + NH4(+). It participates in carbohydrate biosynthesis; gluconeogenesis. In Saccharomyces cerevisiae (strain ATCC 204508 / S288c) (Baker's yeast), this protein is Putative truncated L-serine dehydratase SDL1 (SDL1).